We begin with the raw amino-acid sequence, 252 residues long: 29 kDa protein (252 aa).

The tract at residues 222–252 (YDGPYRPATTRPKSLLSSEDVKRASNKKNSS) is disordered.

This chain is 29 kDa protein, found in Beta vulgaris (Sugar beet).